The following is a 691-amino-acid chain: Elongation factor G (691 aa).

A tr-type G domain is found at 8-283 (EDYRNFGIMA…AVVDFLPNPT (276 aa)). GTP-binding positions include 17-24 (AHIDAGKT), 81-85 (DTPGH), and 135-138 (NKMD).

It belongs to the TRAFAC class translation factor GTPase superfamily. Classic translation factor GTPase family. EF-G/EF-2 subfamily.

Its subcellular location is the cytoplasm. Functionally, catalyzes the GTP-dependent ribosomal translocation step during translation elongation. During this step, the ribosome changes from the pre-translocational (PRE) to the post-translocational (POST) state as the newly formed A-site-bound peptidyl-tRNA and P-site-bound deacylated tRNA move to the P and E sites, respectively. Catalyzes the coordinated movement of the two tRNA molecules, the mRNA and conformational changes in the ribosome. This chain is Elongation factor G, found in Maricaulis maris (strain MCS10) (Caulobacter maris).